Here is a 458-residue protein sequence, read N- to C-terminus: UDP-N-acetylmuramate--L-alanine ligase (458 aa).

112–118 lines the ATP pocket; sequence GTHGKTT.

Belongs to the MurCDEF family.

The protein resides in the cytoplasm. The enzyme catalyses UDP-N-acetyl-alpha-D-muramate + L-alanine + ATP = UDP-N-acetyl-alpha-D-muramoyl-L-alanine + ADP + phosphate + H(+). It functions in the pathway cell wall biogenesis; peptidoglycan biosynthesis. In terms of biological role, cell wall formation. This is UDP-N-acetylmuramate--L-alanine ligase from Syntrophotalea carbinolica (strain DSM 2380 / NBRC 103641 / GraBd1) (Pelobacter carbinolicus).